The following is a 463-amino-acid chain: Perilipin-5 (463 aa).

The segment at 1 to 32 (MDQRGEDTTLAPHSRMSGDQTAQDPGSSLGEL) is disordered. Residues 1–123 (MDQRGEDTTL…KLEEKLPFLQ (123 aa)) form an interaction with LIPE region. Positions 1-188 (MDQRGEDTTL…RFLPMTEAEL (188 aa)) are essential for lipid droplet targeting. A phosphoserine mark is found at S17, S163, and S337. Residues 17–26 (SGDQTAQDPG) show a composition bias toward polar residues. Positions 200–463 (VGTVEEQRQQ…KHTMMPELDF (264 aa)) are interaction with PNPLA2 and ABHD5. Residues 433–463 (AWEAESADPGGQEAEPPRGQGKHTMMPELDF) are disordered. The tract at residues 444–463 (QEAEPPRGQGKHTMMPELDF) is necessary for mitochondria recruitment at the lipid droplet surface.

Belongs to the perilipin family. As to quaternary structure, homooligomer. Interacts with PNPLA2; prevents interaction of PNPLA2 with ABHD5. Interacts with ABHD5; targets ABHD5 to lipid droplets and promotes interaction of ABHD5 with PNPLA2. Interacts with LIPE. Post-translationally, phosphorylated by PKA. Phosphorylated on serine in skeletal muscle at rest or with lipolytic stimulation. As to expression, highly expressed in oxidative tissues, including heart, liver, brown adipose tissue (BAT) and slow-twitch fibers of skeletal muscle. Lower expression in epididymal white adipose tissue and anterior tibialis and quadriceps. Expressed in adrenal glands. Isoform 2 has the highest expression in heart.

The protein resides in the lipid droplet. The protein localises to the cytoplasm. It localises to the mitochondrion. Its function is as follows. Lipid droplet-associated protein that maintains the balance between lipogenesis and lipolysis and also regulates fatty acid oxidation in oxidative tissues. Recruits mitochondria to the surface of lipid droplets and is involved in lipid droplet homeostasis by regulating both the storage of fatty acids in the form of triglycerides and the release of fatty acids for mitochondrial fatty acid oxidation. In lipid droplet triacylglycerol hydrolysis, plays a role as a scaffolding protein for three major key lipolytic players: ABHD5, PNPLA2 and LIPE. Reduces the triacylglycerol hydrolase activity of PNPLA2 by recruiting and sequestering PNPLA2 to lipid droplets. Phosphorylation by PKA enables lipolysis probably by promoting release of ABHD5 from the perilipin scaffold and by facilitating interaction of ABHD5 with PNPLA2. Also increases lipolysis through interaction with LIPE and upon PKA-mediated phosphorylation of LIPE. In Mus musculus (Mouse), this protein is Perilipin-5 (Plin5).